The primary structure comprises 602 residues: Probable beta-glucosidase btgE (602 aa).

The N-terminal stretch at 1–18 (MRGAFLAAAAAVAGTAMA) is a signal peptide. 2 disordered regions span residues 61–94 (PPTL…SVVT) and 116–166 (GVDA…TSFS). A compositionally biased stretch (low complexity) spans 74-94 (PSSSSSSEVPSVPSSESSVVT). A compositionally biased stretch (polar residues) spans 152 to 166 (TSESPLPTPGVTSFS). The active-site Proton donor is the Glu-443. Glu-538 acts as the Nucleophile in catalysis.

The protein belongs to the glycosyl hydrolase 17 family.

Its subcellular location is the secreted. The protein resides in the cell wall. The enzyme catalyses Hydrolysis of terminal, non-reducing beta-D-glucosyl residues with release of beta-D-glucose.. Its pathway is glycan metabolism; cellulose degradation. In terms of biological role, beta-glucosidases are one of a number of cellulolytic enzymes involved in the degradation of cellulosic biomass. Catalyzes the last step releasing glucose from the inhibitory cellobiose. The protein is Probable beta-glucosidase btgE (btgE) of Aspergillus flavus (strain ATCC 200026 / FGSC A1120 / IAM 13836 / NRRL 3357 / JCM 12722 / SRRC 167).